The chain runs to 240 residues: Regulatory protein RecX (240 aa).

It belongs to the RecX family.

It is found in the cytoplasm. Modulates RecA activity. The polypeptide is Regulatory protein RecX (Lacticaseibacillus paracasei (strain ATCC 334 / BCRC 17002 / CCUG 31169 / CIP 107868 / KCTC 3260 / NRRL B-441) (Lactobacillus paracasei)).